A 427-amino-acid chain; its full sequence is Interferon regulatory factor 3 (427 aa).

Thr-3 is modified (phosphothreonine). The IRF tryptophan pentad repeat DNA-binding region spans Lys-5–Asn-111. Ser-14 carries the post-translational modification Phosphoserine. Thr-75 carries the phosphothreonine modification. Basic and acidic residues predominate over residues Arg-91–Tyr-107. Residues Arg-91–Gln-136 are disordered. A phosphoserine mark is found at Ser-97 and Ser-123. A Nuclear export signal motif is present at residues Ile-139–Leu-149. The interval Asp-141 to Ser-427 is mediates interaction with ZDHHC11. A (Microbial infection) Phosphoserine modification is found at Ser-175. At Thr-180 the chain carries Phosphothreonine. Position 188 is a phosphoserine (Ser-188). Lys-193 is covalently cross-linked (Glycyl lysine isopeptide (Lys-Gly) (interchain with G-Cter in ISG15)). The tract at residues Glu-200–Lys-360 is interaction with HERC5. Phosphothreonine is present on residues Thr-237, Thr-244, and Thr-253. Cys-267 and Cys-289 are disulfide-bonded. Residues Lys-360 and Lys-366 each participate in a glycyl lysine isopeptide (Lys-Gly) (interchain with G-Cter in ISG15) cross-link. Lys-366 bears the N6-acetyllysine mark. Residue Ser-385 is modified to Phosphoserine. Residue Ser-386 is modified to Diphosphoserine. The residue at position 386 (Ser-386) is a Phosphoserine; by TBK1. Ser-396 bears the Phosphoserine; by IKKE and TBK1 mark. Residue Ser-398 is modified to Phosphoserine. Thr-404 carries the post-translational modification Phosphothreonine. Ser-427 is subject to Phosphoserine.

It belongs to the IRF family. As to quaternary structure, monomer. Homodimer; phosphorylation-induced. Interacts (when phosphorylated) with CREBBP. Interacts with MAVS (via phosphorylated pLxIS motif). Interacts with TICAM1 (via phosphorylated pLxIS motif). Interacts with STING1 (via phosphorylated pLxIS motif). Interacts with IKBKE and TBK1. Interacts with TICAM2. Interacts with RBCK1. Interacts with HERC5. Interacts with DDX3X (phosphorylated at 'Ser-102'); the interaction allows the phosphorylation and activation of IRF3 by IKBKE. Interacts with TRIM21 and ULK1, in the presence of TRIM21; this interaction leads to IRF3 degradation by autophagy. Interacts with RIOK3; RIOK3 probably mediates the interaction of TBK1 with IRF3. Interacts with ILRUN; the interaction inhibits IRF3 binding to its DNA consensus sequence. Interacts with LYAR; this interaction impairs IRF3 DNA-binding activity. Interacts with TRAF3. Interacts with ZDHHC11; ZDHHC11 recruits IRF3 to STING1 upon DNA virus infection and thereby promotes IRF3 activation. Interacts with HSP90AA1; the interaction mediates IRF3 association with TOMM70. Interacts with BCL2; the interaction decreases upon Sendai virus infection. Interacts with BAX; the interaction is direct, increases upon Sendai virus infection and mediates the formation of the apoptosis complex TOMM70:HSP90AA1:IRF3:BAX. Interacts with DDX56. Interacts with NBR1. In terms of assembly, (Microbial infection) Interacts with rotavirus A NSP1 (via pLxIS motif); this interaction leads to the proteasome-dependent degradation of IRF3. (Microbial infection) Interacts with herpes virus 8/HHV-8 protein VIRF1. As to quaternary structure, (Microbial infection) Interacts with Seneca Valley virus protease 3C; this interaction is involved in the suppression of IRF3 expression and phosphorylation by the virus. In terms of assembly, (Microbial infection) Interacts with herpes virus 2/HHV-2 protein ICP27; this interaction inhibits IRF3 phosphorylation and nuclear translocation. (Microbial infection) Interacts with human cytomegalovirus protein UL44; this interaction prevents IRF3 binding to its promoters. As to quaternary structure, (Microbial infection) Interacts with the two fragments of MERS-COV protein N produced by CASP6 through proteolytic cleavage; both interactions inhibit IRF3 nuclear translocation after activation and IFN signaling. In terms of processing, constitutively phosphorylated on many Ser/Thr residues. Activated following phosphorylation by TBK1 and IKBKE. Innate adapter proteins, such as MAVS, STING1 or TICAM1, are first activated by viral RNA, cytosolic DNA, and bacterial lipopolysaccharide (LPS), respectively, leading to activation of the kinases TBK1 and IKBKE. These kinases then phosphorylate the adapter proteins on the pLxIS motif, leading to recruitment of IRF3, thereby licensing IRF3 for phosphorylation by TBK1. Phosphorylation at Ser-386 is followed by pyrophosphorylation at the same residue, promoting phosphorylation at Ser-396. Phosphorylated IRF3 dissociates from the adapter proteins, dimerizes, and then enters the nucleus to induce IFNs. Pyrophosphorylated by UAP1 following phosphorylation at Ser-386 by TBK1. Pyrophosphorylation promotes subsequent phosphorylation at Ser-396, leading to homodimerization of IRF3. Post-translationally, acetylation at Lys-366 by KAT8 inhibits recruimtent to promoters and transcription factor activity. Acetylation by KAT8 is promoted by phosphorylation at Ser-396. In terms of processing, ubiquitinated; ubiquitination involves RBCK1 leading to proteasomal degradation. Polyubiquitinated; ubiquitination involves TRIM21 leading to proteasomal degradation. Ubiquitinated by UBE3C, leading to its degradation. Deubiquitinated by USP5 on both 'Lys-48'-linked unanchored and 'Lys-63'-linked anchored polyubiquitin, leading to inhibition of anti-RNA viral innate immunity. ISGylated by HERC5 resulting in sustained IRF3 activation and in the inhibition of IRF3 ubiquitination by disrupting PIN1 binding. The phosphorylation state of IRF3 does not alter ISGylation. Post-translationally, proteolytically cleaved by apoptotic caspases during apoptosis, leading to its inactivation. Cleavage by CASP3 during virus-induced apoptosis inactivates it, preventing cytokine overproduction. In terms of processing, (Microbial infection) ISGylated. ISGylation is cleaved and removed by SARS-COV-2 nsp3 which attenuates type I interferon responses. (Microbial infection) Phosphorylation and subsequent activation of IRF3 is inhibited by vaccinia virus protein E3. Post-translationally, (Microbial infection) Phosphorylated by herpes simplex virus 1/HHV-1 US3 at Ser-175 to prevent IRF3 activation. As to expression, expressed constitutively in a variety of tissues.

It is found in the cytoplasm. It localises to the nucleus. Its subcellular location is the mitochondrion. With respect to regulation, in the absence of viral infection, maintained as a monomer in an autoinhibited state. Phosphorylation by TBK1 and IKBKE disrupts this autoinhibition leading to the liberation of the DNA-binding and dimerization activities and its nuclear localization where it can activate type I IFN and ISG genes. Phosphorylation and activation follow the following steps: innate adapter proteins, such as MAVS, STING1 or TICAM1, are first activated by viral RNA, cytosolic DNA and bacterial lipopolysaccharide (LPS), respectively, leading to activation of the kinases TBK1 and IKBKE. These kinases then phosphorylate the adapter proteins on their pLxIS motif, leading to recruitment of IRF3, thereby licensing IRF3 for phosphorylation by TBK1. Phosphorylated IRF3 dissociates from the adapter proteins, dimerizes, and then enters the nucleus to induce IFNs. (Microbial infection) Activated upon coronavirus SARS-CoV-2 infection. Its function is as follows. Key transcriptional regulator of type I interferon (IFN)-dependent immune responses which plays a critical role in the innate immune response against DNA and RNA viruses. Regulates the transcription of type I IFN genes (IFN-alpha and IFN-beta) and IFN-stimulated genes (ISG) by binding to an interferon-stimulated response element (ISRE) in their promoters. Acts as a more potent activator of the IFN-beta (IFNB) gene than the IFN-alpha (IFNA) gene and plays a critical role in both the early and late phases of the IFNA/B gene induction. Found in an inactive form in the cytoplasm of uninfected cells and following viral infection, double-stranded RNA (dsRNA), or toll-like receptor (TLR) signaling, is phosphorylated by IKBKE and TBK1 kinases. This induces a conformational change, leading to its dimerization and nuclear localization and association with CREB binding protein (CREBBP) to form dsRNA-activated factor 1 (DRAF1), a complex which activates the transcription of the type I IFN and ISG genes. Can activate distinct gene expression programs in macrophages and can induce significant apoptosis in primary macrophages. In response to Sendai virus infection, is recruited by TOMM70:HSP90AA1 to mitochondrion and forms an apoptosis complex TOMM70:HSP90AA1:IRF3:BAX inducing apoptosis. Key transcription factor regulating the IFN response during SARS-CoV-2 infection. The sequence is that of Interferon regulatory factor 3 from Homo sapiens (Human).